The sequence spans 485 residues: MPLTQLHCPHLLLLLLVLSCLPEAPSAQVMDFLFEKWKLYSDQCHHNLSLLPPPTELVCNRTFDKYSCWPDTPPNTTANISCPWYLPWYHKVQHRLVFKRCGPDGQWVRGPRGQPWRNASQCQLDDEEIEVQKGVAKMYSSQQVMYTVGYSLSLGALLLALVILLGLRKLHCTRNYIHGNLFASFVLKAGSVLVIDWLLKTRYSQKIGDDLSVSVWLSDGAMAGCRVATVIMQYGIIANYCWLLVEGVYLYSLLSLATFSERSFFSLYLGIGWGAPLLFVIPWVVVKCLFENVQCWTSNDNMGFWWILRIPVFLALLINFFIFVHIIHLLVAKLRAHQMHYADYKFRLARSTLTLIPLLGVHEVVFAFVTDEHAQGTLRSTKLFFDLFLSSFQGLLVAVLYCFLNKEVQAELMRRWRQWQEGKALQEERLASSHGSHMAPAGPCHGDPCEKLQLMSAGSSSGTGCVPSMETSLASSLPRLADSPT.

The signal sequence occupies residues 1–26 (MPLTQLHCPHLLLLLLVLSCLPEAPS). Residues 27–137 (AQVMDFLFEK…EIEVQKGVAK (111 aa)) lie on the Extracellular side of the membrane. Intrachain disulfides connect C44–C68, C59–C101, and C82–C122. N-linked (GlcNAc...) asparagine glycosylation is found at N47, N60, N75, N79, and N118. A helical membrane pass occupies residues 138 to 162 (MYSSQQVMYTVGYSLSLGALLLALV). At 163–174 (ILLGLRKLHCTR) the chain is on the cytoplasmic side. A helical membrane pass occupies residues 175–199 (NYIHGNLFASFVLKAGSVLVIDWLL). The Extracellular segment spans residues 200–226 (KTRYSQKIGDDLSVSVWLSDGAMAGCR). Cysteines 225 and 295 form a disulfide. Residues 227–250 (VATVIMQYGIIANYCWLLVEGVYL) form a helical membrane-spanning segment. The Cytoplasmic segment spans residues 251-264 (YSLLSLATFSERSF). A helical transmembrane segment spans residues 265 to 286 (FSLYLGIGWGAPLLFVIPWVVV). Residues 287-304 (KCLFENVQCWTSNDNMGF) are Extracellular-facing. A helical transmembrane segment spans residues 305–327 (WWILRIPVFLALLINFFIFVHII). Topologically, residues 328-351 (HLLVAKLRAHQMHYADYKFRLARS) are cytoplasmic. The segment at 351–354 (STLT) is important for allosteric inhibitor binding. The helical transmembrane segment at 352-370 (TLTLIPLLGVHEVVFAFVT) threads the bilayer. The Extracellular portion of the chain corresponds to 371–382 (DEHAQGTLRSTK). Residues 383–403 (LFFDLFLSSFQGLLVAVLYCF) form a helical membrane-spanning segment. Over 404–485 (LNKEVQAELM…SLPRLADSPT (82 aa)) the chain is Cytoplasmic. Positions 457–475 (AGSSSGTGCVPSMETSLAS) are enriched in polar residues. The segment at 457–485 (AGSSSGTGCVPSMETSLASSLPRLADSPT) is disordered. Phosphoserine is present on residues S460 and S476.

The protein belongs to the G-protein coupled receptor 2 family. Ligand-binding promotes phosphorylation of serine residues in the C-terminal cytoplasmic domain. Phosphorylation is important for receptor endocytosis after ligand-binding. In terms of tissue distribution, expressed predominantly in liver, kidney, adrenal, lung and stomach, while lower levels of expression are detected in brown and white adipose tissue, cerebellum, duodenum and heart.

It is found in the cell membrane. In terms of biological role, G-protein coupled receptor for glucagon that plays a central role in the regulation of blood glucose levels and glucose homeostasis. Regulates the rate of hepatic glucose production by promoting glycogen hydrolysis and gluconeogenesis. Plays an important role in mediating the responses to fasting. Ligand binding causes a conformation change that triggers signaling via guanine nucleotide-binding proteins (G proteins) and modulates the activity of down-stream effectors, such as adenylate cyclase. Promotes activation of adenylate cyclase. Besides, plays a role in signaling via a phosphatidylinositol-calcium second messenger system. The sequence is that of Glucagon receptor (Gcgr) from Mus musculus (Mouse).